The following is a 791-amino-acid chain: MECGSHSGHRPIPIWLSSCLVAMCLGLPLGAAVPQEAPAYYYVGCYTARTDLLHESVYAKTPQTCIEICEHQGHHYAVLASEKCFCANVLEPQEQQDEQLCNTRCLANKAQYCGGVGVHSYYSTILTKQPGPHHLRISNKTENSLTLSWNAYEARKLLLAGGAEAVLPNQLLDNFLIKAQVLKTYSSLPAFPQPEFMVQSTETQFELTDLHPATLYNISVRAMCKDAQVGQSECGQASIEATTEVGLPSPVPAQPKILSRTDRTVTIELSPIRNDNGPLSKLLVIVEYVDNALSQPFDAQLLGSWQQAQQDGVPYYIAAELDYDRPEDNRTRRFVVGDGKRYGRFTNKPLDQPDAHVHISLGLVSTLEGVTKTMYSRGTHDQHVTSLDDFSYATFEKGQSSVVALAVTCVIFGSCLLLSLIAYFYLRYKTCRGRRLTGGNTHEMTLQTPIIERENNGYLVEDDPLPHSPENFKQQLQQLVEGYERIPRNALRLNVNDVIGDGRFGEIITGKVSTNDFARDCTLHVLCLDDLNGTTQAQLLRELRQLSQLKRQEHLLDFYGVSASPDWFYLIFEQQRMSLKRKLVESRLMAPSPRLTSLSEQLVLQWIYELASAMNYLSSCQVVHRQLCSHSVFVTSDFKLKLSVFGPLPYMNIARQQPDHNRWLAPEVLRHQHHHSTRSDVWSLACVAWECCALGGTPYANAVASNQQLLEAIRAAVRPAQPAYVYGDLYQLLLNCWQLEPSERSSCEDVAFGVRQLMTSPRHALSFDRVAGGLDTLPPYLPQLEAVATMG.

Residues 1–26 form the signal peptide; the sequence is MECGSHSGHRPIPIWLSSCLVAMCLG. Topologically, residues 27 to 401 are extracellular; that stretch reads LPLGAAVPQE…YATFEKGQSS (375 aa). In terms of domain architecture, WSC spans 39–125; it reads AYYYVGCYTA…VGVHSYYSTI (87 aa). A Fibronectin type-III domain is found at 131–246; sequence GPHHLRISNK…ASIEATTEVG (116 aa). Asparagine 139, asparagine 217, and asparagine 329 each carry an N-linked (GlcNAc...) asparagine glycan. Residues 402–422 form a helical membrane-spanning segment; that stretch reads VVALAVTCVIFGSCLLLSLIA. The Cytoplasmic portion of the chain corresponds to 423-791; sequence YFYLRYKTCR…PQLEAVATMG (369 aa). In terms of domain architecture, Protein kinase spans 493-758; sequence LNVNDVIGDG…DVAFGVRQLM (266 aa). ATP is bound at residue 499–507; that stretch reads IGDGRFGEI.

Belongs to the protein kinase superfamily. Tyr protein kinase family.

It localises to the membrane. Functionally, probably lacks tyrosine-protein kinase activity. This Drosophila melanogaster (Fruit fly) protein is Putative inactive tyrosine-protein kinase Wsck.